We begin with the raw amino-acid sequence, 520 residues long: Sodium-dependent dicarboxylate transporter SdcS (520 aa).

14 helical membrane passes run 30-50 (AGQL…LLFF), 55-75 (LPWE…WWIT), 77-97 (AIPI…GHIL), 104-124 (SEYG…AIAM), 160-180 (SMFV…LAII), 207-227 (IGYA…PLII), 242-262 (FAKW…ITWL), 298-318 (KVVQ…EFLL), 323-343 (VTSS…LFVI), 362-382 (ELPW…KGIS), 399-419 (GVSP…LTEV), 428-448 (MILP…LLLM), 452-472 (AMAA…AIIF), and 491-511 (LISA…VLGI).

This sequence belongs to the SLC13A/DASS transporter (TC 2.A.47) family. NADC subfamily.

The protein localises to the cell membrane. In terms of biological role, mediates the transport of the dicarboxylates fumarate, malate, and succinate across the cytoplasmic membrane via a Na(+)-electrochemical gradient. The chain is Sodium-dependent dicarboxylate transporter SdcS (sdcS) from Staphylococcus aureus (strain bovine RF122 / ET3-1).